The sequence spans 216 residues: Phosphoribosylformylglycinamidine synthase subunit PurQ (216 aa).

The Glutamine amidotransferase type-1 domain maps to 2-216; the sequence is SIGVIVFPGS…GRRMLEALLG (215 aa). Cys86 functions as the Nucleophile in the catalytic mechanism. Active-site residues include His193 and Glu195.

As to quaternary structure, part of the FGAM synthase complex composed of 1 PurL, 1 PurQ and 2 PurS subunits.

Its subcellular location is the cytoplasm. The catalysed reaction is N(2)-formyl-N(1)-(5-phospho-beta-D-ribosyl)glycinamide + L-glutamine + ATP + H2O = 2-formamido-N(1)-(5-O-phospho-beta-D-ribosyl)acetamidine + L-glutamate + ADP + phosphate + H(+). It catalyses the reaction L-glutamine + H2O = L-glutamate + NH4(+). Its pathway is purine metabolism; IMP biosynthesis via de novo pathway; 5-amino-1-(5-phospho-D-ribosyl)imidazole from N(2)-formyl-N(1)-(5-phospho-D-ribosyl)glycinamide: step 1/2. Its function is as follows. Part of the phosphoribosylformylglycinamidine synthase complex involved in the purines biosynthetic pathway. Catalyzes the ATP-dependent conversion of formylglycinamide ribonucleotide (FGAR) and glutamine to yield formylglycinamidine ribonucleotide (FGAM) and glutamate. The FGAM synthase complex is composed of three subunits. PurQ produces an ammonia molecule by converting glutamine to glutamate. PurL transfers the ammonia molecule to FGAR to form FGAM in an ATP-dependent manner. PurS interacts with PurQ and PurL and is thought to assist in the transfer of the ammonia molecule from PurQ to PurL. The polypeptide is Phosphoribosylformylglycinamidine synthase subunit PurQ (Synechococcus sp. (strain CC9605)).